The primary structure comprises 486 residues: Ribulose bisphosphate carboxylase large chain (486 aa).

Positions 125 and 175 each coordinate substrate. Lys177 functions as the Proton acceptor in the catalytic mechanism. Residue Lys179 coordinates substrate. 3 residues coordinate Mg(2+): Lys203, Asp205, and Glu206. Lys203 bears the N6-carboxylysine mark. His295 serves as the catalytic Proton acceptor. Substrate is bound by residues Arg296, His328, and Ser380.

The protein belongs to the RuBisCO large chain family. Type I subfamily. In terms of assembly, heterohexadecamer of 8 large chains and 8 small chains. Mg(2+) serves as cofactor.

The enzyme catalyses 2 (2R)-3-phosphoglycerate + 2 H(+) = D-ribulose 1,5-bisphosphate + CO2 + H2O. The catalysed reaction is D-ribulose 1,5-bisphosphate + O2 = 2-phosphoglycolate + (2R)-3-phosphoglycerate + 2 H(+). RuBisCO catalyzes two reactions: the carboxylation of D-ribulose 1,5-bisphosphate, the primary event in carbon dioxide fixation, as well as the oxidative fragmentation of the pentose substrate. Both reactions occur simultaneously and in competition at the same active site. This is Ribulose bisphosphate carboxylase large chain from Cereibacter sphaeroides (Rhodobacter sphaeroides).